Reading from the N-terminus, the 405-residue chain is Glyceraldehyde-3-phosphate dehydrogenase A, chloroplastic (405 aa).

Residues 1 to 68 (MASATFSVAK…GHKKSLVVEA (68 aa)) constitute a chloroplast transit peptide. NADP(+)-binding positions include 80 to 81 (RI), Asp-104, and Arg-149. D-glyceraldehyde 3-phosphate is bound by residues 221 to 223 (SCT), Thr-252, Arg-267, 280 to 281 (TG), and Arg-303. Cys-222 serves as the catalytic Nucleophile. An NADP(+)-binding site is contributed by Asn-385.

Belongs to the glyceraldehyde-3-phosphate dehydrogenase family. As to quaternary structure, tetramer of either four A chains (GAPDH 2) or two A and two B chains (GAPDH 1).

It is found in the plastid. Its subcellular location is the chloroplast. The catalysed reaction is D-glyceraldehyde 3-phosphate + phosphate + NADP(+) = (2R)-3-phospho-glyceroyl phosphate + NADPH + H(+). Its pathway is carbohydrate biosynthesis; Calvin cycle. This is Glyceraldehyde-3-phosphate dehydrogenase A, chloroplastic (GAPA) from Pisum sativum (Garden pea).